A 903-amino-acid chain; its full sequence is Immunoglobulin superfamily member 22 (903 aa).

Ig-like domains lie at 67-158 (PEFV…LLVT), 232-322 (EAIR…AELT), 418-508 (PIKF…AIVT), and 606-696 (PSVL…LHLS). Fibronectin type-III domains lie at 703 to 798 (FASQ…AKDP) and 804 to 898 (LVQD…MPPP).

This chain is Immunoglobulin superfamily member 22 (IGSF22), found in Homo sapiens (Human).